The primary structure comprises 63 residues: ATP synthase F(0) complex subunit 8 (63 aa).

The helical transmembrane segment at 8-24 (MWLLTILSMLLTLFVLF) threads the bilayer. Lys57 is subject to N6-acetyllysine.

It belongs to the ATPase protein 8 family. In terms of assembly, component of the ATP synthase complex composed at least of ATP5F1A/subunit alpha, ATP5F1B/subunit beta, ATP5MC1/subunit c (homooctomer), MT-ATP6/subunit a, MT-ATP8/subunit 8, ATP5ME/subunit e, ATP5MF/subunit f, ATP5MG/subunit g, ATP5MK/subunit k, ATP5MJ/subunit j, ATP5F1C/subunit gamma, ATP5F1D/subunit delta, ATP5F1E/subunit epsilon, ATP5PF/subunit F6, ATP5PB/subunit b, ATP5PD/subunit d, ATP5PO/subunit OSCP. ATP synthase complex consists of a soluble F(1) head domain (subunits alpha(3) and beta(3)) - the catalytic core - and a membrane F(0) domain - the membrane proton channel (subunits c, a, 8, e, f, g, k and j). These two domains are linked by a central stalk (subunits gamma, delta, and epsilon) rotating inside the F1 region and a stationary peripheral stalk (subunits F6, b, d, and OSCP). Interacts with PRICKLE3.

It localises to the mitochondrion membrane. Its function is as follows. Subunit 8, of the mitochondrial membrane ATP synthase complex (F(1)F(0) ATP synthase or Complex V) that produces ATP from ADP in the presence of a proton gradient across the membrane which is generated by electron transport complexes of the respiratory chain. ATP synthase complex consist of a soluble F(1) head domain - the catalytic core - and a membrane F(1) domain - the membrane proton channel. These two domains are linked by a central stalk rotating inside the F(1) region and a stationary peripheral stalk. During catalysis, ATP synthesis in the catalytic domain of F(1) is coupled via a rotary mechanism of the central stalk subunits to proton translocation. In vivo, can only synthesize ATP although its ATP hydrolase activity can be activated artificially in vitro. Part of the complex F(0) domain. The chain is ATP synthase F(0) complex subunit 8 from Balaenoptera physalus (Fin whale).